The primary structure comprises 547 residues: Chaperonin GroEL (547 aa).

ATP is bound by residues 29-32, Lys50, 86-90, Gly414, 478-480, and Asp494; these read TLGP, DGTTT, and NAA.

It belongs to the chaperonin (HSP60) family. Forms a cylinder of 14 subunits composed of two heptameric rings stacked back-to-back. Interacts with the co-chaperonin GroES.

Its subcellular location is the cytoplasm. The enzyme catalyses ATP + H2O + a folded polypeptide = ADP + phosphate + an unfolded polypeptide.. Its function is as follows. Together with its co-chaperonin GroES, plays an essential role in assisting protein folding. The GroEL-GroES system forms a nano-cage that allows encapsulation of the non-native substrate proteins and provides a physical environment optimized to promote and accelerate protein folding. The protein is Chaperonin GroEL of Saccharophagus degradans (strain 2-40 / ATCC 43961 / DSM 17024).